The following is a 542-amino-acid chain: MKRTRRALPANYDPVYPYDAPGSSTQPPFFNNKQGLTESPPGTLAVNVSPPLTFSTLGAIKLSTGPGLTLNEGKLQASLGPGLITNTEGQITVENVNKVLSFTSPLHKNENTVSLALGDGLEDENGTLKVTFPTPPPPLQFSPPLTKTGGTVSLPLQDSMQVTNGKLGVKPTTYAPPLKKTDQQVSLQVGSGLTVINEQLQAVQPPATTYNEPLSKTDNSVSLQVGAGLAVQSGALVATPPPPLTFTSPLEKNENTVSLQVGAGLSVQNNALVATPPPPLTFAYPLVKNDNHVALSAGSGLRISGGSLTVATGPGLSHQNGTIGAVVGAGLKFENNAILAKLGNGLTIRDGAIEATQPPAAPITLWTGPGPSINGFINDTPVIRCFICLTRDSNLVTVNASFVGEGGYRIVSPTQSQFSLIMEFDQFGQLMSTGNINSTTTWGEKPWGNNTVQPRPSHTWKLCMPNREVYSTPAATISRCGLDSIAVDGAPSRSIDCMLIINKPKGVATYTLTFRFLNFNRLSGGTLFKTDVLTFTYVGENQ.

The segment at 1-24 (MKRTRRALPANYDPVYPYDAPGSS) is disordered.

It belongs to the adenoviridae fiber family. In terms of assembly, homotrimer. Interacts (via N-terminal tail region) with pentons.

The protein localises to the virion. It is found in the host nucleus. Forms spikes that protrude from each vertex of the icosahedral capsid. Interacts with host receptor to provide virion initial attachment to target cell. Fiber proteins are shed during virus entry, when virus is still at the cell surface. The chain is Fiber protein from Canine adenovirus serotype 2 (strain Toronto A 26-61) (CAdV-2).